The chain runs to 517 residues: Apolipoprotein N-acyltransferase (517 aa).

7 helical membrane passes run 5 to 25 (SFFS…ATLT), 26 to 46 (FAPY…LWLL), 55 to 75 (GLIG…WVHV), 90 to 110 (FLMS…GALF), 128 to 148 (VIWL…PWLW), 162 to 182 (APIL…GALV), and 193 to 213 (LMVP…SWVV). In terms of domain architecture, CN hydrolase spans 225 to 471 (IQGNVPQELK…TAVLRATITP (247 aa)). The active-site Proton acceptor is E264. Residue K330 is part of the active site. C382 serves as the catalytic Nucleophile.

It belongs to the CN hydrolase family. Apolipoprotein N-acyltransferase subfamily.

The protein resides in the cell inner membrane. The enzyme catalyses N-terminal S-1,2-diacyl-sn-glyceryl-L-cysteinyl-[lipoprotein] + a glycerophospholipid = N-acyl-S-1,2-diacyl-sn-glyceryl-L-cysteinyl-[lipoprotein] + a 2-acyl-sn-glycero-3-phospholipid + H(+). Its pathway is protein modification; lipoprotein biosynthesis (N-acyl transfer). In terms of biological role, catalyzes the phospholipid dependent N-acylation of the N-terminal cysteine of apolipoprotein, the last step in lipoprotein maturation. The polypeptide is Apolipoprotein N-acyltransferase (Photobacterium profundum (strain SS9)).